Reading from the N-terminus, the 127-residue chain is MAAAGARGLRATYHRLMDKVELLLPKKLRPLYNHPAGPRTVFFWAPIMKWGLVCAGLADMARPAEKLSTAQSTVLMATGFIWSRYSLVIIPKNWSLFAVNFFVGSAGASQLFRIWKYNQELKSKGIQ.

The Mitochondrial matrix segment spans residues 2–40 (AAAGARGLRATYHRLMDKVELLLPKKLRPLYNHPAGPRT). Position 26 is an N6-acetyllysine (Lys-26). A helical transmembrane segment spans residues 41-61 (VFFWAPIMKWGLVCAGLADMA). At 62-72 (RPAEKLSTAQS) the chain is on the mitochondrial intermembrane side. A helical transmembrane segment spans residues 73 to 90 (TVLMATGFIWSRYSLVII). Residues 91-95 (PKNWS) are Mitochondrial matrix-facing. The helical transmembrane segment at 96 to 115 (LFAVNFFVGSAGASQLFRIW) threads the bilayer. At 116-127 (KYNQELKSKGIQ) the chain is on the mitochondrial intermembrane side.

Belongs to the mitochondrial pyruvate carrier (MPC) (TC 2.A.105) family. In terms of assembly, homodimer. Homooligomer. Forms heterodimers with MPC1 and MPC1L. The heterodimer is the more stable and dominant form. In terms of tissue distribution, liver, kidney, and brain.

It localises to the mitochondrion inner membrane. It catalyses the reaction pyruvate(out) + H(+)(out) = pyruvate(in) + H(+)(in). Its function is as follows. Mediates the uptake of pyruvate into mitochondria. This is Mitochondrial pyruvate carrier 2 (Mpc2) from Rattus norvegicus (Rat).